The chain runs to 79 residues: Cytochrome b (79 aa).

The next 3 membrane-spanning stretches (helical) occupy residues 1–7 (TAMFLAM), 31–52 (WLIR…YLHI), and 67–79 (WNVG…LTMM). H37 and H51 together coordinate heme b.

This sequence belongs to the cytochrome b family. The cytochrome bc1 complex contains 3 respiratory subunits (MT-CYB, CYC1 and UQCRFS1), 2 core proteins (UQCRC1 and UQCRC2) and probably 6 low-molecular weight proteins. Heme b serves as cofactor.

The protein localises to the mitochondrion inner membrane. Its function is as follows. Component of the ubiquinol-cytochrome c reductase complex (complex III or cytochrome b-c1 complex) that is part of the mitochondrial respiratory chain. The b-c1 complex mediates electron transfer from ubiquinol to cytochrome c. Contributes to the generation of a proton gradient across the mitochondrial membrane that is then used for ATP synthesis. In Hypsophrys nicaraguensis (Moga), this protein is Cytochrome b (mt-cyb).